We begin with the raw amino-acid sequence, 345 residues long: Alkaline phosphatase isozyme conversion protein (345 aa).

A signal peptide spans 1–24 (MFSALRHRTAALALGVCFILPVHA). Residues His117, Asp143, Glu176, and Asp204 each contribute to the Zn(2+) site.

It belongs to the peptidase M28 family. M28C subfamily.

Its function is as follows. This protein, presumably an aminopeptidase, mediates the conversion of E.coli alkaline phosphatase isozyme 1, to isozymes 2 and 3 by removing, one by one, the two N-terminal arginine residues. The sequence is that of Alkaline phosphatase isozyme conversion protein (iap) from Escherichia coli (strain K12).